The following is a 434-amino-acid chain: Galactofuranosyl glycosyltransferase (434 aa).

Residues 1–18 (MAPPRWHHDRRRMAIFVR) lie on the Cytoplasmic side of the membrane. A helical; Signal-anchor for type II membrane protein transmembrane segment spans residues 19 to 38 (VGLYTLLFLMGYVVPLIIFY). Residues N39, N100, N162, and N388 are each glycosylated (N-linked (GlcNAc...) asparagine). The Lumenal portion of the chain corresponds to 39–434 (NRSRADTFED…KLLDFPVDPS (396 aa)).

The protein belongs to the glycosyltransferase 2 family.

It is found in the endoplasmic reticulum membrane. Its pathway is glycolipid biosynthesis; glycosylphosphatidylinositol-anchor biosynthesis. In terms of biological role, glycosyltransferase that may be responsible for the addition of galactofuranosyl residues to the nascent lipophosphoglycan (LPG) chain. It could alternatively be involved in the synthesis of the galactofuranosyl donor. The chain is Galactofuranosyl glycosyltransferase (LPG1) from Leishmania donovani.